The sequence spans 330 residues: Lipoyl synthase (330 aa).

Positions 77, 82, 88, 103, 107, 110, and 317 each coordinate [4Fe-4S] cluster. Positions 89 to 306 constitute a Radical SAM core domain; that stretch reads FNHGTATFMI…RSEAERMGFE (218 aa).

It belongs to the radical SAM superfamily. Lipoyl synthase family. It depends on [4Fe-4S] cluster as a cofactor.

It is found in the cytoplasm. It carries out the reaction [[Fe-S] cluster scaffold protein carrying a second [4Fe-4S](2+) cluster] + N(6)-octanoyl-L-lysyl-[protein] + 2 oxidized [2Fe-2S]-[ferredoxin] + 2 S-adenosyl-L-methionine + 4 H(+) = [[Fe-S] cluster scaffold protein] + N(6)-[(R)-dihydrolipoyl]-L-lysyl-[protein] + 4 Fe(3+) + 2 hydrogen sulfide + 2 5'-deoxyadenosine + 2 L-methionine + 2 reduced [2Fe-2S]-[ferredoxin]. It participates in protein modification; protein lipoylation via endogenous pathway; protein N(6)-(lipoyl)lysine from octanoyl-[acyl-carrier-protein]: step 2/2. In terms of biological role, catalyzes the radical-mediated insertion of two sulfur atoms into the C-6 and C-8 positions of the octanoyl moiety bound to the lipoyl domains of lipoate-dependent enzymes, thereby converting the octanoylated domains into lipoylated derivatives. The polypeptide is Lipoyl synthase (Actinobacillus pleuropneumoniae serotype 3 (strain JL03)).